The following is a 189-amino-acid chain: UPF0312 protein VC_A0539 (189 aa).

An N-terminal signal peptide occupies residues 1-22 (MKKTLMAVGLAAVMSIPFAANA).

The protein belongs to the UPF0312 family. Type 1 subfamily.

It localises to the periplasm. This Vibrio cholerae serotype O1 (strain ATCC 39315 / El Tor Inaba N16961) protein is UPF0312 protein VC_A0539.